The sequence spans 372 residues: sn-glycerol-3-phosphate import ATP-binding protein UgpC (372 aa).

Positions 2–233 (LDIQQLVKTY…PASTFVASFI (232 aa)) constitute an ABC transporter domain. 35-42 (GPSGCGKS) serves as a coordination point for ATP.

This sequence belongs to the ABC transporter superfamily. sn-glycerol-3-phosphate importer (TC 3.A.1.1.3) family. As to quaternary structure, the complex is composed of two ATP-binding proteins (UgpC), two transmembrane proteins (UgpA and UgpE) and a solute-binding protein (UgpB).

It localises to the cell inner membrane. It carries out the reaction sn-glycerol 3-phosphate(out) + ATP + H2O = sn-glycerol 3-phosphate(in) + ADP + phosphate + H(+). Its function is as follows. Part of the ABC transporter complex UgpBAEC involved in sn-glycerol-3-phosphate (G3P) import. Responsible for energy coupling to the transport system. This Vibrio vulnificus (strain CMCP6) protein is sn-glycerol-3-phosphate import ATP-binding protein UgpC.